A 729-amino-acid chain; its full sequence is Phosphoribosylformylglycinamidine synthase subunit PurL (729 aa).

Residue His-42 is part of the active site. The ATP site is built by Tyr-45 and Lys-84. Residue Glu-86 coordinates Mg(2+). Residues Ser-87–His-90 and Arg-109 contribute to the substrate site. Catalysis depends on His-88, which acts as the Proton acceptor. Asp-110 contacts Mg(2+). A substrate-binding site is contributed by Gln-238. Residue Asp-266 participates in Mg(2+) binding. Glu-310 to Gln-312 contacts substrate. ATP is bound by residues Asp-492 and Gly-529. Asn-530 serves as a coordination point for Mg(2+). Ser-532 contributes to the substrate binding site.

Belongs to the FGAMS family. In terms of assembly, monomer. Part of the FGAM synthase complex composed of 1 PurL, 1 PurQ and 2 PurS subunits.

It localises to the cytoplasm. The catalysed reaction is N(2)-formyl-N(1)-(5-phospho-beta-D-ribosyl)glycinamide + L-glutamine + ATP + H2O = 2-formamido-N(1)-(5-O-phospho-beta-D-ribosyl)acetamidine + L-glutamate + ADP + phosphate + H(+). The protein operates within purine metabolism; IMP biosynthesis via de novo pathway; 5-amino-1-(5-phospho-D-ribosyl)imidazole from N(2)-formyl-N(1)-(5-phospho-D-ribosyl)glycinamide: step 1/2. Part of the phosphoribosylformylglycinamidine synthase complex involved in the purines biosynthetic pathway. Catalyzes the ATP-dependent conversion of formylglycinamide ribonucleotide (FGAR) and glutamine to yield formylglycinamidine ribonucleotide (FGAM) and glutamate. The FGAM synthase complex is composed of three subunits. PurQ produces an ammonia molecule by converting glutamine to glutamate. PurL transfers the ammonia molecule to FGAR to form FGAM in an ATP-dependent manner. PurS interacts with PurQ and PurL and is thought to assist in the transfer of the ammonia molecule from PurQ to PurL. The sequence is that of Phosphoribosylformylglycinamidine synthase subunit PurL from Campylobacter concisus (strain 13826).